A 401-amino-acid chain; its full sequence is Argininosuccinate synthase (401 aa).

9 to 17 (AYSGGLDTS) contributes to the ATP binding site. L-citrulline is bound at residue Tyr86. Gly116 serves as a coordination point for ATP. Residues Thr118, Asn122, and Asp123 each contribute to the L-aspartate site. Asn122 is an L-citrulline binding site. Residues Arg126, Ser174, Ser183, Glu259, and Tyr271 each contribute to the L-citrulline site.

It belongs to the argininosuccinate synthase family. Type 1 subfamily. In terms of assembly, homotetramer.

The protein localises to the cytoplasm. It carries out the reaction L-citrulline + L-aspartate + ATP = 2-(N(omega)-L-arginino)succinate + AMP + diphosphate + H(+). It participates in amino-acid biosynthesis; L-arginine biosynthesis; L-arginine from L-ornithine and carbamoyl phosphate: step 2/3. In Bacillus cereus (strain AH187), this protein is Argininosuccinate synthase.